Reading from the N-terminus, the 388-residue chain is Probable proton-coupled zinc antiporter SLC30A3 (388 aa).

Residues 1 to 42 (MEPSPASGGSETTRLVSPRDRSSAGGGLRLKSLFTEPSEPLP) are disordered. Residues 1-75 (MEPSPASGGS…SPERAQARRQ (75 aa)) are Cytoplasmic-facing. S63 and S66 each carry phosphoserine. The chain crosses the membrane as a helical span at residues 76–96 (LYAACVVCFIFMAGEVVGGYL). Over 97 to 105 (AHSLAIMTD) the chain is Lumenal. Residues 106 to 126 (AAHLLADIGSMMASLFSLWLS) traverse the membrane as a helical segment. Zn(2+)-binding residues include H108 and D112. Topologically, residues 127 to 145 (TRPATRTMTFGWHRSETLG) are cytoplasmic. Residues 146-166 (ALASVVSLWIVTGILLYLAFL) traverse the membrane as a helical segment. At 167–177 (RLLHSDYHIEA) the chain is on the lumenal side. The helical transmembrane segment at 178 to 198 (GAMLLTASIAVCANMIMAFVL) threads the bilayer. At 199 to 235 (HQTGAPHSHGPRGAEYAPLEEGHGHPLSLGNTSVRAA) the chain is on the cytoplasmic side. A helical membrane pass occupies residues 236–256 (FVHVLGDLLQSLGVLAASILI). Zn(2+) contacts are provided by H238 and D242. Topologically, residues 257-263 (YFKPQYK) are lumenal. Residues 264–284 (VADPISTFLFSICALGSTAPT) form a helical membrane-spanning segment. At 285–388 (LRDVLLVLME…CLRCREPPKA (104 aa)) the chain is on the cytoplasmic side.

This sequence belongs to the cation diffusion facilitator (CDF) transporter (TC 2.A.4) family. SLC30A subfamily. In terms of assembly, homodimer. Homodimerization could regulate efficiency of zinc transport. Interacts with TMEM163.

The protein localises to the cytoplasmic vesicle. Its subcellular location is the secretory vesicle. The protein resides in the synaptic vesicle membrane. It localises to the synapse. It is found in the synaptosome. The protein localises to the late endosome membrane. Its subcellular location is the lysosome membrane. The enzyme catalyses Zn(2+)(in) + 2 H(+)(out) = Zn(2+)(out) + 2 H(+)(in). Its function is as follows. Probable proton-coupled zinc ion antiporter mediating the import of zinc from cytoplasm into synaptic vesicles and participating to cellular zinc ion homeostasis in the brain. This chain is Probable proton-coupled zinc antiporter SLC30A3, found in Rattus norvegicus (Rat).